Here is a 195-residue protein sequence, read N- to C-terminus: uncharacterized protein (195 aa).

A disordered region spans residues 143–195 (NKLIETINTNRTNNTDNKSTKSKKQTETKKSLRTNKIVKQPINKSKKNIREEY). Over residues 148–159 (TINTNRTNNTDN) the composition is skewed to low complexity.

This is an uncharacterized protein from Acanthamoeba polyphaga (Amoeba).